Reading from the N-terminus, the 107-residue chain is Thioredoxin (107 aa).

In terms of domain architecture, Thioredoxin spans 2 to 107; it reads SATPQVSDAS…TLASTLEKYL (106 aa). Cysteines 32 and 35 form a disulfide.

The protein belongs to the thioredoxin family.

In terms of biological role, component of the thioredoxin-thioredoxin reductase system. Participates in various redox reactions through the reversible oxidation of its active center dithiol to a disulfide and catalyzes dithiol-disulfide exchange reactions. The protein is Thioredoxin (trxA) of Synechocystis sp. (strain ATCC 27184 / PCC 6803 / Kazusa).